Here is an 89-residue protein sequence, read N- to C-terminus: Small ribosomal subunit protein uS15 (89 aa).

It belongs to the universal ribosomal protein uS15 family. As to quaternary structure, part of the 30S ribosomal subunit. Forms a bridge to the 50S subunit in the 70S ribosome, contacting the 23S rRNA.

In terms of biological role, one of the primary rRNA binding proteins, it binds directly to 16S rRNA where it helps nucleate assembly of the platform of the 30S subunit by binding and bridging several RNA helices of the 16S rRNA. Its function is as follows. Forms an intersubunit bridge (bridge B4) with the 23S rRNA of the 50S subunit in the ribosome. This Lysinibacillus sphaericus (strain C3-41) protein is Small ribosomal subunit protein uS15.